A 318-amino-acid chain; its full sequence is Aspartate carbamoyltransferase catalytic subunit (318 aa).

Residues arginine 59 and threonine 60 each contribute to the carbamoyl phosphate site. Lysine 87 lines the L-aspartate pocket. The carbamoyl phosphate site is built by arginine 109, histidine 137, and glutamine 140. L-aspartate contacts are provided by arginine 170 and arginine 224. The carbamoyl phosphate site is built by glycine 265 and proline 266.

Belongs to the aspartate/ornithine carbamoyltransferase superfamily. ATCase family. In terms of assembly, heterododecamer (2C3:3R2) of six catalytic PyrB chains organized as two trimers (C3), and six regulatory PyrI chains organized as three dimers (R2).

The enzyme catalyses carbamoyl phosphate + L-aspartate = N-carbamoyl-L-aspartate + phosphate + H(+). It participates in pyrimidine metabolism; UMP biosynthesis via de novo pathway; (S)-dihydroorotate from bicarbonate: step 2/3. Catalyzes the condensation of carbamoyl phosphate and aspartate to form carbamoyl aspartate and inorganic phosphate, the committed step in the de novo pyrimidine nucleotide biosynthesis pathway. This Rhizobium johnstonii (strain DSM 114642 / LMG 32736 / 3841) (Rhizobium leguminosarum bv. viciae) protein is Aspartate carbamoyltransferase catalytic subunit.